The following is a 264-amino-acid chain: Outer kinetochore KNL1 complex subunit sos7 (264 aa).

Residues 90-236 (EAEDNEKLET…SNQIKAAIHT (147 aa)) are a coiled coil.

Belongs to the KRE28 family. As to quaternary structure, component of the KNL1/SPC105 complex composed of at least spc7 and sos7. Part of the outer kinetochore KMN network that includes the KNL1, MIS12 and NDC80 complexes. Interacts (via C-terminus) with spc7 (via C-terminus); the interaction is direct.

The protein resides in the nucleus. It localises to the chromosome. It is found in the centromere. Its subcellular location is the kinetochore. Functionally, acts as a component of the outer kinetochore KNL1 complex that facilitates microtubule-kinetochore interactions and the spindle assembly checkpoint. Kinetochores, consisting of a centromere-associated inner segment and a microtubule-contacting outer segment, play a crucial role in chromosome segregation by mediating the physical connection between centromeric DNA and spindle microtubules. The outer kinetochore is made up of the ten-subunit KMN network, comprising the MIS12, NDC80 and KNL1 complexes, and auxiliary microtubule-associated components; together they connect the outer kinetochore with the inner kinetochore, bind microtubules, and mediate interactions with mitotic checkpoint proteins that delay anaphase until chromosomes are bioriented on the spindle. The protein is Outer kinetochore KNL1 complex subunit sos7 (sos7) of Schizosaccharomyces pombe (strain 972 / ATCC 24843) (Fission yeast).